The sequence spans 503 residues: Probable cytosol aminopeptidase (503 aa).

The Mn(2+) site is built by K270 and D275. The active site involves K282. 3 residues coordinate Mn(2+): D293, D352, and E354. R356 is a catalytic residue.

It belongs to the peptidase M17 family. Mn(2+) serves as cofactor.

Its subcellular location is the cytoplasm. It carries out the reaction Release of an N-terminal amino acid, Xaa-|-Yaa-, in which Xaa is preferably Leu, but may be other amino acids including Pro although not Arg or Lys, and Yaa may be Pro. Amino acid amides and methyl esters are also readily hydrolyzed, but rates on arylamides are exceedingly low.. The catalysed reaction is Release of an N-terminal amino acid, preferentially leucine, but not glutamic or aspartic acids.. Presumably involved in the processing and regular turnover of intracellular proteins. Catalyzes the removal of unsubstituted N-terminal amino acids from various peptides. This Edwardsiella ictaluri (strain 93-146) protein is Probable cytosol aminopeptidase.